A 78-amino-acid chain; its full sequence is Large ribosomal subunit protein uL24 (78 aa).

A disordered region spans residues 52–78 (PSEKTPNGGHVNKEMPIDISNVAKVEG).

The protein belongs to the universal ribosomal protein uL24 family. As to quaternary structure, part of the 50S ribosomal subunit.

In terms of biological role, one of two assembly initiator proteins, it binds directly to the 5'-end of the 23S rRNA, where it nucleates assembly of the 50S subunit. Its function is as follows. One of the proteins that surrounds the polypeptide exit tunnel on the outside of the subunit. This chain is Large ribosomal subunit protein uL24, found in Campylobacter concisus (strain 13826).